A 246-amino-acid polypeptide reads, in one-letter code: Probable septum site-determining protein MinC (246 aa).

This sequence belongs to the MinC family. In terms of assembly, interacts with MinD and FtsZ.

In terms of biological role, cell division inhibitor that blocks the formation of polar Z ring septums. Rapidly oscillates between the poles of the cell to destabilize FtsZ filaments that have formed before they mature into polar Z rings. Prevents FtsZ polymerization. This Pseudomonas syringae pv. tomato (strain ATCC BAA-871 / DC3000) protein is Probable septum site-determining protein MinC.